The chain runs to 368 residues: Phenylalanine--tRNA ligase alpha subunit (368 aa).

E268 is a Mg(2+) binding site.

Belongs to the class-II aminoacyl-tRNA synthetase family. Phe-tRNA synthetase alpha subunit type 1 subfamily. As to quaternary structure, tetramer of two alpha and two beta subunits. Requires Mg(2+) as cofactor.

The protein resides in the cytoplasm. It carries out the reaction tRNA(Phe) + L-phenylalanine + ATP = L-phenylalanyl-tRNA(Phe) + AMP + diphosphate + H(+). This chain is Phenylalanine--tRNA ligase alpha subunit, found in Nitrobacter hamburgensis (strain DSM 10229 / NCIMB 13809 / X14).